Consider the following 521-residue polypeptide: CD166 antigen (521 aa).

The Extracellular segment spans residues Gly1–Lys465. N-linked (GlcNAc...) asparagine glycosylation is found at Asn29, Asn33, Asn105, Asn203, Asn244, Asn299, Asn395, Asn418, and Asn437. In terms of domain architecture, Ig-like V-type 2 spans Pro63 to His172. Cys95 and Cys158 are disulfide-bonded. 3 Ig-like C2-type domains span residues Pro183–Thr266, Asp271–Thr347, and Pro354–Ser439. Disulfide bonds link Cys208/Cys251, Cys292/Cys330, and Cys373/Cys423. A helical transmembrane segment spans residues Leu466–Leu487. The Cytoplasmic segment spans residues Tyr488–Ala521. The tract at residues Asn500–Ala521 is disordered. The span at Glu507–Ala521 shows a compositional bias: basic and acidic residues.

Homodimer. Interacts (via extracellular domain) with CD6 (via extracellular domain). Homodimerization and interaction with CD6 involve the same region and cannot occur simultaneously. The affinity for CD6 is much higher than the affinity for self-association. Interacts (via glycosylated extracellular domain) with LGALS1 and LGALS3. Interaction with LGALS1 or LGALS3 inhibits interaction with CD6. In terms of processing, glycosylated.

It localises to the cell membrane. It is found in the cell projection. Its subcellular location is the axon. The protein localises to the dendrite. Functionally, cell adhesion molecule that mediates both heterotypic cell-cell contacts via its interaction with CD6, as well as homotypic cell-cell contacts. Promotes T-cell activation and proliferation via its interactions with CD6. Contributes to the formation and maturation of the immunological synapse via its interactions with CD6. Mediates homotypic interactions with cells that express ALCAM. Mediates attachment of dendritic cells onto endothelial cells via homotypic interaction. Inhibits endothelial cell migration and promotes endothelial tube formation via homotypic interactions. Required for normal organization of the lymph vessel network. Required for normal hematopoietic stem cell engraftment in the bone marrow. Plays a role in hematopoiesis; required for normal numbers of hematopoietic stem cells in bone marrow. Promotes in vitro osteoblast proliferation and differentiation. Promotes neurite extension, axon growth and axon guidance; axons grow preferentially on surfaces that contain ALCAM. Mediates outgrowth and pathfinding for retinal ganglion cell axons. This Oryctolagus cuniculus (Rabbit) protein is CD166 antigen (ALCAM).